Consider the following 150-residue polypeptide: UPF0756 membrane protein Dd1591_2981 (150 aa).

A run of 4 helical transmembrane segments spans residues 10–32 (ILLA…AILF), 51–71 (YGLS…IASG), 88–108 (LMAV…VVLM), and 127–147 (ALFR…SLLI).

Belongs to the UPF0756 family.

The protein resides in the cell membrane. This Dickeya chrysanthemi (strain Ech1591) (Dickeya zeae (strain Ech1591)) protein is UPF0756 membrane protein Dd1591_2981.